We begin with the raw amino-acid sequence, 473 residues long: Photosystem II CP43 reaction center protein (473 aa).

A propeptide spanning residues 1–14 (MKTLYSLRRSYPVE) is cleaved from the precursor. Thr-15 carries the post-translational modification N-acetylthreonine. Phosphothreonine is present on Thr-15. 5 helical membrane-spanning segments follow: residues 69–93 (LFEVAHFVPEKPMYEQGLILLPHLA), 134–155 (LIGPETLEESFPFFGYVWKDRN), 178–200 (KALYFGGVYDTWAPGGGDVRKIT), 255–275 (KPFAWARRAFVWSGEAYLSYS), and 291–312 (WFNNTVYPSEFYGPTGPEASQA). Glu-367 is a [CaMn4O5] cluster binding site. Residues 447-471 (RARAAAAGFEKGIDRDFEPVLSMTP) traverse the membrane as a helical segment.

It belongs to the PsbB/PsbC family. PsbC subfamily. In terms of assembly, PSII is composed of 1 copy each of membrane proteins PsbA, PsbB, PsbC, PsbD, PsbE, PsbF, PsbH, PsbI, PsbJ, PsbK, PsbL, PsbM, PsbT, PsbX, PsbY, PsbZ, Psb30/Ycf12, at least 3 peripheral proteins of the oxygen-evolving complex and a large number of cofactors. It forms dimeric complexes. Binds multiple chlorophylls and provides some of the ligands for the Ca-4Mn-5O cluster of the oxygen-evolving complex. It may also provide a ligand for a Cl- that is required for oxygen evolution. PSII binds additional chlorophylls, carotenoids and specific lipids. is required as a cofactor.

It localises to the plastid. Its subcellular location is the chloroplast thylakoid membrane. Its function is as follows. One of the components of the core complex of photosystem II (PSII). It binds chlorophyll and helps catalyze the primary light-induced photochemical processes of PSII. PSII is a light-driven water:plastoquinone oxidoreductase, using light energy to abstract electrons from H(2)O, generating O(2) and a proton gradient subsequently used for ATP formation. The protein is Photosystem II CP43 reaction center protein of Pinus koraiensis (Korean pine).